The sequence spans 1045 residues: Elongation factor 3 (1045 aa).

ADP contacts are provided by Ile42, His44, and Ser83. 7 HEAT repeats span residues 86–123 (PYVV…AVNP), 125–162 (AVKA…QAKS), 166–203 (LRMT…TVEN), 171–209 (LIPV…IERF), 205–241 (DIER…EVTP), 242–279 (ATLS…LVED), and 285–323 (PFLN…VGAV). Positions 392 and 396 each coordinate ADP. 2 consecutive ABC transporter domains span residues 426-641 (EEGE…YYEL) and 667-993 (VKVS…KKED). 4 residues coordinate ADP: Asn703, Glu922, Asn925, and His951. The disordered stretch occupies residues 975 to 1045 (GHNWVSGQGS…AYVSDDDADF (71 aa)). Positions 1020–1031 (RKKKKERMKKKK) are enriched in basic residues.

This sequence belongs to the ABC transporter superfamily. ABCF family. EF3 subfamily.

The protein resides in the cytoplasm. Its subcellular location is the cytosol. It carries out the reaction ATP + H2O = ADP + phosphate + H(+). Its pathway is protein biosynthesis; polypeptide chain elongation. Functionally, ribosome-dependent ATPase that functions in cytoplasmic translation elongation. Required for the ATP-dependent release of deacylated tRNA from the ribosomal E-site during protein biosynthesis. Stimulates the eEF1A-dependent binding of aminoacyl-tRNA to the ribosomal A-site, which has reduced affinity for tRNA as long as the E-site is occupied. Assists translation termination by stimulating the release of nascent protein from the ribosome by release factors. The chain is Elongation factor 3 from Zygosaccharomyces rouxii (strain ATCC 2623 / CBS 732 / NBRC 1130 / NCYC 568 / NRRL Y-229).